An 84-amino-acid chain; its full sequence is Omega-conotoxin-like ArMKLT1-02 (84 aa).

Positions 1–22 (MKVTCMMIVAVLFLTAWTFVTA) are cleaved as a signal peptide. Residues 23–51 (DDSISALEDLFAKAHDKMENSEASPLNER) constitute a propeptide that is removed on maturation. 3 disulfide bridges follow: Cys-53–Cys-71, Cys-60–Cys-75, and Cys-70–Cys-79.

Belongs to the conotoxin O1 superfamily. As to expression, expressed by the venom duct.

It localises to the secreted. In terms of biological role, omega-conotoxins act at presynaptic membranes, they bind and block voltage-gated calcium channels (Cav). The chain is Omega-conotoxin-like ArMKLT1-02 from Conus arenatus (Sand-dusted cone).